A 123-amino-acid polypeptide reads, in one-letter code: MIQMQTNLDVADNSGAKRVQCIKVLGGSKRRTATVGDVIVVSVKEAAPRGRVKKGDVHRAVIVRTAKDIHRADGSVIRFDGNAAVLINKTSGEPIGTRIFGPVVRELRARNHMKIISLAPEVL.

It belongs to the universal ribosomal protein uL14 family. In terms of assembly, part of the 50S ribosomal subunit. Forms a cluster with proteins L3 and L19. In the 70S ribosome, L14 and L19 interact and together make contacts with the 16S rRNA in bridges B5 and B8.

In terms of biological role, binds to 23S rRNA. Forms part of two intersubunit bridges in the 70S ribosome. This chain is Large ribosomal subunit protein uL14, found in Zymomonas mobilis subsp. mobilis (strain ATCC 31821 / ZM4 / CP4).